The following is a 242-amino-acid chain: uncharacterized protein (242 aa).

Residues 1–11 (MNFEAASAPSQ) are compositionally biased toward low complexity. Residues 1–45 (MNFEAASAPSQQPSPTPAPKTEEPKENGGSEQQADQPENSKKDDV) are disordered.

The protein to U.parvum UU171.

This is an uncharacterized protein from Ureaplasma parvum serovar 3 (strain ATCC 700970).